A 390-amino-acid polypeptide reads, in one-letter code: Galactokinase (390 aa).

33–36 (EHTD) lines the substrate pocket. Residues Ser67 and 124-130 (GAGLSSS) contribute to the ATP site. Residues Ser130 and Glu162 each coordinate Mg(2+). The active-site Proton acceptor is the Asp174. Tyr224 is a substrate binding site.

Belongs to the GHMP kinase family. GalK subfamily.

It localises to the cytoplasm. The catalysed reaction is alpha-D-galactose + ATP = alpha-D-galactose 1-phosphate + ADP + H(+). The protein operates within carbohydrate metabolism; galactose metabolism. Functionally, catalyzes the transfer of the gamma-phosphate of ATP to D-galactose to form alpha-D-galactose-1-phosphate (Gal-1-P). The chain is Galactokinase from Bacillus subtilis (strain 168).